Consider the following 348-residue polypeptide: MSETPIWPPRWPRAHGGPLAAGDFRATPEDFVVEEVFDFAPEGQGEHLWLWIEKRDLTTPEAAKRVARACGVRPRDVGYSGLKDRVAVTRQWLSVHLPGREAPAELTATLATSGIAILDARRHPRKLKRGVHRLNRFTLRLTGDIAEHPGLSRQWQTLCEAGVPNYFGPQRFGREGRNLIMARSAFARGWRKRDDPHGMQLSAARSFLFNEVLAARLRTDCWRTPRDGDVLALAGSASRFVTETVDATLLDRARRGDVAPTGPLWGKGRQESGAEVAALEADIMATHAALSQGLEAAGARMDRRPLCLRLETPALRLDEEGGVVVSFGLPRGAFATAVLRELMQHPVL.

Residue D84 is the Nucleophile of the active site. In terms of domain architecture, TRUD spans G162–L308.

The protein belongs to the pseudouridine synthase TruD family.

It catalyses the reaction uridine(13) in tRNA = pseudouridine(13) in tRNA. Responsible for synthesis of pseudouridine from uracil-13 in transfer RNAs. In Chromohalobacter salexigens (strain ATCC BAA-138 / DSM 3043 / CIP 106854 / NCIMB 13768 / 1H11), this protein is tRNA pseudouridine synthase D.